An 88-amino-acid polypeptide reads, in one-letter code: Arminin 1b (88 aa).

The signal sequence occupies residues 1–18 (MKTVLAFLFLTFIAFTHA). Positions 19-57 (ESYEDVKEEIKNEVEREIFEDLEEESDVLESNVRELNDA) are excised as a propeptide. Val-85 carries the valine amide modification.

It belongs to the arminin family. Expressed in entodermal epithelium along the body column.

The protein resides in the secreted. It is found in the target cell membrane. Antimicrobial peptide with a broad-spectrum antimicrobial activity. Keeps its antibacterial activity under a wide range of salt concentrations that mimic physiological conditions of human blood, which is surprising, since Hydra is an obligate freshwater animal with nearly no salt tolerance. Does not affect red blood cells. In Hydra vulgaris (Hydra), this protein is Arminin 1b.